A 187-amino-acid chain; its full sequence is MLRELVIYGDERLQKVSEKIEKIDDEILTLIDDMFETMYKERGVGLAAVQIGVLKRLVVISVPDFDDEEKPDFKLALINPEIIWHNDETESLEEGCLSFPEIRDDVARYTQIKVKYLDREGNEQILDAENYIAKVLQHEIDHTNGISFIDRLESYQKRRLKRELKELRNNTVRGIKKVNNREMLKNS.

Residues Cys-96 and His-138 each contribute to the Fe cation site. Residue Glu-139 is part of the active site. Residue His-142 coordinates Fe cation.

It belongs to the polypeptide deformylase family. Fe(2+) is required as a cofactor.

It catalyses the reaction N-terminal N-formyl-L-methionyl-[peptide] + H2O = N-terminal L-methionyl-[peptide] + formate. Its function is as follows. Removes the formyl group from the N-terminal Met of newly synthesized proteins. Requires at least a dipeptide for an efficient rate of reaction. N-terminal L-methionine is a prerequisite for activity but the enzyme has broad specificity at other positions. This is Peptide deformylase from Brachyspira hyodysenteriae (strain ATCC 49526 / WA1).